The chain runs to 594 residues: Arginine--tRNA ligase (594 aa).

A 'HIGH' region motif is present at residues Ala133–Ser143.

The protein belongs to the class-I aminoacyl-tRNA synthetase family. In terms of assembly, monomer.

It is found in the cytoplasm. The catalysed reaction is tRNA(Arg) + L-arginine + ATP = L-arginyl-tRNA(Arg) + AMP + diphosphate. The chain is Arginine--tRNA ligase from Leptospira biflexa serovar Patoc (strain Patoc 1 / Ames).